Consider the following 658-residue polypeptide: Vertnin (658 aa).

This sequence belongs to the vertnin family.

The protein localises to the nucleus. Functionally, acts as a transcription factor that regulates development of thoracic vertebrae. The polypeptide is Vertnin (VRTN) (Bos taurus (Bovine)).